Here is a 619-residue protein sequence, read N- to C-terminus: TOX high mobility group box family member 4 (619 aa).

Disordered stretches follow at residues 155 to 227 (LSLG…QKPV) and 306 to 335 (DPVP…TESP). The residue at position 176 (Thr176) is a Phosphothreonine. Phosphoserine is present on residues Ser178 and Ser182. Positions 183–193 (LHEDGVDDFRR) are enriched in basic and acidic residues. Residues 208 to 218 (KQKAPKKRKKK) are compositionally biased toward basic residues. The Nuclear localization signal signature appears at 213 to 218 (KKRKKK). A DNA-binding region (HMG box) is located at residues 223-291 (PQKPVSAYAL…EYLKALAAYK (69 aa)). The residue at position 313 (Thr313) is a Phosphothreonine. A Phosphoserine modification is found at Ser315. Residues 320–335 (TAADPASPAPASTESP) show a composition bias toward low complexity. An Asymmetric dimethylarginine modification is found at Arg479. Residues Ser531, Ser548, Ser550, Ser558, Ser560, and Ser565 each carry the phosphoserine modification.

In terms of assembly, component of the PNUTS-PP1 phosphatase complex, composed of PPP1R10/PNUTS, TOX4, WDR82 and PPP1CA or PPP1CB or PPP1CC. Interacts with PPP1R10/PNUTS. Interacts with FOXO1 and CREB1 (increased by cAMP); FOXO1 and CREB1 are required for full induction of TOX4-dependent activity and the interactions are inhibited by insulin.

The protein localises to the nucleus. It is found in the chromosome. With respect to regulation, in liver, recruited to target gene promoters following treatment with dexamethasone and cAMP. Binding is decreased in presence of insulin. Its function is as follows. Transcription factor that modulates cell fate reprogramming from the somatic state to the pluripotent and neuronal fate. In liver, controls the expression of hormone-regulated gluconeogenic genes such as G6PC1 and PCK1. This regulation is independent of the insulin receptor activation. Also acts as a regulatory component of protein phosphatase 1 (PP1) complexes. Component of the PNUTS-PP1 protein phosphatase complex, a PP1 complex that regulates RNA polymerase II transcription pause-release. PNUTS-PP1 also plays a role in the control of chromatin structure and cell cycle progression during the transition from mitosis into interphase. This Mus musculus (Mouse) protein is TOX high mobility group box family member 4.